The primary structure comprises 134 residues: Small ribosomal subunit protein uS11 (134 aa).

Positions 114 to 134 (TPVPHNGTRPPRKWFKRQEKR) are disordered. Basic residues predominate over residues 123 to 134 (PPRKWFKRQEKR).

This sequence belongs to the universal ribosomal protein uS11 family. As to quaternary structure, part of the 30S ribosomal subunit. Interacts with proteins S7 and S18. Binds to IF-3.

Located on the platform of the 30S subunit, it bridges several disparate RNA helices of the 16S rRNA. Forms part of the Shine-Dalgarno cleft in the 70S ribosome. The protein is Small ribosomal subunit protein uS11 of Mesomycoplasma hyopneumoniae (strain 232) (Mycoplasma hyopneumoniae).